Here is a 234-residue protein sequence, read N- to C-terminus: Small ribosomal subunit protein uS2 (234 aa).

The protein belongs to the universal ribosomal protein uS2 family.

In Prochlorococcus marinus (strain MIT 9515), this protein is Small ribosomal subunit protein uS2.